A 287-amino-acid chain; its full sequence is uncharacterized protein (287 aa).

The protein belongs to the A.longa ORF167/ORF288 family.

It localises to the plastid. This is an uncharacterized protein from Euglena longa (Euglenophycean alga).